The chain runs to 319 residues: Acetyl esterase (319 aa).

The Involved in the stabilization of the negatively charged intermediate by the formation of the oxyanion hole motif lies at 91–93 (HGG). Catalysis depends on residues Ser-165, Asp-262, and His-292.

Belongs to the 'GDXG' lipolytic enzyme family. As to quaternary structure, homodimer. Interacts with MalT and MelA.

It is found in the cytoplasm. In terms of biological role, displays esterase activity towards short chain fatty esters (acyl chain length of up to 8 carbons). Able to hydrolyze triacetylglycerol (triacetin) and tributyrylglycerol (tributyrin), but not trioleylglycerol (triolein) or cholesterol oleate. Negatively regulates MalT activity by antagonizing maltotriose binding. Inhibits MelA galactosidase activity. The polypeptide is Acetyl esterase (Escherichia coli O6:H1 (strain CFT073 / ATCC 700928 / UPEC)).